The sequence spans 616 residues: Secretogranin-2 (616 aa).

Residues 1–27 form the signal peptide; that stretch reads MAEAKTHWLGASLSLILLIFLLATAEA. The propeptide occupies 28 to 30; the sequence is ASF. Disordered regions lie at residues 68–104 and 120–146; these read QAHK…RDSL and AENE…PMDM. A compositionally biased stretch (basic and acidic residues) spans 92–104; it reads ENSDLPESSRDSL. Over residues 122-140 the composition is skewed to polar residues; it reads NEPQSSLKENKPYTLNSEK. At tyrosine 150 the chain carries Sulfotyrosine. 6 positions are modified to phosphoserine: serine 173, serine 267, serine 431, serine 531, serine 554, and serine 555. Positions 255–283 are enriched in basic and acidic residues; that stretch reads KIESQTQEEVRDSKENIEKNEQINDEMKR. A disordered region spans residues 255–290; it reads KIESQTQEEVRDSKENIEKNEQINDEMKRSGQMGLQ. The segment covering 548–560 has biased composition (basic and acidic residues); sequence ERLNQHSSQETDK. The segment at 548-582 is disordered; the sequence is ERLNQHSSQETDKLALVSKRLPVATPKSDDAPNRQ.

Belongs to the chromogranin/secretogranin protein family. As to quaternary structure, interacts with Secretogranin III/SCG3.

It is found in the secreted. In terms of biological role, neuroendocrine protein of the granin family that regulates the biogenesis of secretory granules. This is Secretogranin-2 (SCG2) from Sus scrofa (Pig).